We begin with the raw amino-acid sequence, 227 residues long: Large ribosomal subunit protein uL1 (227 aa).

The protein belongs to the universal ribosomal protein uL1 family. Part of the 50S ribosomal subunit.

Functionally, binds directly to 23S rRNA. The L1 stalk is quite mobile in the ribosome, and is involved in E site tRNA release. In terms of biological role, protein L1 is also a translational repressor protein, it controls the translation of the L11 operon by binding to its mRNA. This is Large ribosomal subunit protein uL1 from Brevibacillus brevis (strain 47 / JCM 6285 / NBRC 100599).